We begin with the raw amino-acid sequence, 196 residues long: Imidazoleglycerol-phosphate dehydratase (196 aa).

Belongs to the imidazoleglycerol-phosphate dehydratase family.

It is found in the cytoplasm. It catalyses the reaction D-erythro-1-(imidazol-4-yl)glycerol 3-phosphate = 3-(imidazol-4-yl)-2-oxopropyl phosphate + H2O. Its pathway is amino-acid biosynthesis; L-histidine biosynthesis; L-histidine from 5-phospho-alpha-D-ribose 1-diphosphate: step 6/9. In Clostridium botulinum (strain Kyoto / Type A2), this protein is Imidazoleglycerol-phosphate dehydratase.